A 418-amino-acid chain; its full sequence is CCA-adding enzyme (418 aa).

Positions 54 and 57 each coordinate ATP. 2 residues coordinate CTP: Ser-54 and Arg-57. Asp-66, Asp-68, and Asp-118 together coordinate Mg(2+). His-141, Lys-161, and Tyr-170 together coordinate ATP. The CTP site is built by His-141, Lys-161, and Tyr-170.

It belongs to the tRNA nucleotidyltransferase/poly(A) polymerase family. Archaeal CCA-adding enzyme subfamily. Homodimer. It depends on Mg(2+) as a cofactor.

The catalysed reaction is a tRNA precursor + 2 CTP + ATP = a tRNA with a 3' CCA end + 3 diphosphate. It carries out the reaction a tRNA with a 3' CCA end + 2 CTP + ATP = a tRNA with a 3' CCACCA end + 3 diphosphate. Catalyzes the addition and repair of the essential 3'-terminal CCA sequence in tRNAs without using a nucleic acid template. Adds these three nucleotides in the order of C, C, and A to the tRNA nucleotide-73, using CTP and ATP as substrates and producing inorganic pyrophosphate. tRNA 3'-terminal CCA addition is required both for tRNA processing and repair. Also involved in tRNA surveillance by mediating tandem CCA addition to generate a CCACCA at the 3' terminus of unstable tRNAs. While stable tRNAs receive only 3'-terminal CCA, unstable tRNAs are marked with CCACCA and rapidly degraded. This is CCA-adding enzyme from Pyrobaculum islandicum (strain DSM 4184 / JCM 9189 / GEO3).